We begin with the raw amino-acid sequence, 252 residues long: Probable endonuclease 4 (252 aa).

Zn(2+)-binding residues include His-56, His-96, Glu-129, Asp-162, His-165, His-191, Asp-204, His-206, and Glu-233.

The protein belongs to the AP endonuclease 2 family. Requires Zn(2+) as cofactor.

It catalyses the reaction Endonucleolytic cleavage to 5'-phosphooligonucleotide end-products.. In terms of biological role, endonuclease IV plays a role in DNA repair. It cleaves phosphodiester bonds at apurinic or apyrimidinic (AP) sites, generating a 3'-hydroxyl group and a 5'-terminal sugar phosphate. This chain is Probable endonuclease 4, found in Mycobacterium marinum (strain ATCC BAA-535 / M).